Consider the following 184-residue polypeptide: Spiro-conjugate synthase (184 aa).

The cysteines at positions 57 and 184 are disulfide-linked. Gln-115 serves as a coordination point for (1S,3R,6R,8R,9R,11R,14S,15S,19R,20R)-8-ethyl-9,15-dihydroxy-3,4,6,20-tetramethyl-21,23-dioxo-24-azapentacyclo[20.2.1.0(1,6).0(11,20).0(14,19)]pentacosa-4,12,22(25)-trien-25-olate.

Homodimer.

It carries out the reaction 4-[(1R,2R,4aS,5S,8aR)-2-[(2R,3R,5E,7E)-3-ethyl-2-hydroxy-5,7-dimethylnona-5,7-dien-1-yl]-5-hydroxy-1-methyl-1,2,4a,5,6,7,8,8a-octahydronaphthalene-1-carbonyl]-2-methylidene-5-oxo-2,5-dihydro-1H-pyrrol-3-olate = (1S,3R,6R,8R,9R,11R,14S,15S,19R,20R)-8-ethyl-9,15-dihydroxy-3,4,6,20-tetramethyl-21,23-dioxo-24-azapentacyclo[20.2.1.0(1,6).0(11,20).0(14,19)]pentacosa-4,12,22(25)-trien-25-olate. It functions in the pathway antibiotic biosynthesis. Functionally, involved in the biosynthesis of the spirotetramate antibiotics pyrroindomycins. Catalyzes the intramolecular cyclization forming the spiro-conjugate moiety in pyrroindomycins, via an exo-selective [4+2] cycloaddition reaction. The protein is Spiro-conjugate synthase of Streptomyces rugosporus.